A 410-amino-acid chain; its full sequence is WD repeat-containing protein jip5 (410 aa).

WD repeat units lie at residues 9 to 48, 74 to 113, 119 to 160, 223 to 264, 273 to 316, and 320 to 357; these read PLSADLFAQAIHPSEPIISVGLSTGHVQTFRLPTEEEEEH, RHKGSCRTLTFGIDGEMLYSAGTDGLVKAAKAETGVVENK, AKDG…SKVA, VSST…DQDE, GGGE…VVSE, and DETEGVIGLGFDVEGHMVSGGGQIVKVWHEAADSIGGE. The disordered stretch occupies residues 41–65; that stretch reads PTEEEEEHSDDEQASVSSSRNGKGH. Residues 43 to 53 are compositionally biased toward acidic residues; that stretch reads EEEEEHSDDEQ. The disordered stretch occupies residues 354-410; that stretch reads IGGEKRGFGGDSDDSDDDSDDSDHEPKQGDDSRRKRKKQKGKDRGKGPEIMAFADLD. The segment covering 364-376 has biased composition (acidic residues); the sequence is DSDDSDDDSDDSD. A compositionally biased stretch (basic and acidic residues) spans 377–386; the sequence is HEPKQGDDSR.

The protein belongs to the WD repeat WDR55 family.

It is found in the nucleus. It localises to the nucleolus. In Emericella nidulans (strain FGSC A4 / ATCC 38163 / CBS 112.46 / NRRL 194 / M139) (Aspergillus nidulans), this protein is WD repeat-containing protein jip5 (jip5).